The primary structure comprises 295 residues: (R)-3-hydroxydecanoyl-ACP:CoA transacylase (295 aa).

One can recognise an AB hydrolase-1 domain in the interval 28–254; the sequence is NTIILINGSL…VIRDAGHFLD (227 aa).

It participates in polyester biosynthesis; polyhydroxyalkanoate biosynthesis. Its function is as follows. Catalyzes the transfer of the acyl moiety from in vitro synthesized 3-hydroxydecanoyl-CoA to acyl carrier protein. This is (R)-3-hydroxydecanoyl-ACP:CoA transacylase (phaG) from Pseudomonas putida (strain ATCC 47054 / DSM 6125 / CFBP 8728 / NCIMB 11950 / KT2440).